A 391-amino-acid polypeptide reads, in one-letter code: MAFAPSHTASPSYCGVAQGGRRSNGMSPVVAMASTINRVKTAKKPYTPPREVHLQVKHSLPPQKREIFDSLQPWAKENLLNLLKPVEKSWQPQDFLPDPSSDGFYDEVKELRERAKEIPDDYFVCLVGDMVTEEALPTYQTMLNTLDGVRDETGASPTTWAVWTRAWTAEENRHGDLLNKYMYLTGRVDMKQIEKTIQYLIGSGMDPGTENNPYLGFLYTSFQERATFISHGNTARHAKEYGDLKLAQICGTIAADEKRHETAYTKIVEKLFEIDPDYTVLAFADMMRKKISMPAHLMYDGKDDNLFEHFSAVAQRLGVYTARDYADILEFLVQRWKVADLTGLSGEGRRAQDFVCTLAPRIRRLDERAQARAKQAPVIPFSWVYDRKVQL.

Residues 1–20 (MAFAPSHTASPSYCGVAQGG) form a disordered region. The transit peptide at 1-32 (MAFAPSHTASPSYCGVAQGGRRSNGMSPVVAM) directs the protein to the chloroplast. Positions 133, 171, 174, 224, 257, and 260 each coordinate Fe cation.

This sequence belongs to the fatty acid desaturase type 2 family. As to quaternary structure, homodimer. Fe(2+) is required as a cofactor.

It is found in the plastid. The protein resides in the chloroplast. The catalysed reaction is octadecanoyl-[ACP] + 2 reduced [2Fe-2S]-[ferredoxin] + O2 + 2 H(+) = (9Z)-octadecenoyl-[ACP] + 2 oxidized [2Fe-2S]-[ferredoxin] + 2 H2O. The protein operates within lipid metabolism; fatty acid metabolism. Its function is as follows. Converts stearoyl-ACP to oleoyl-ACP by introduction of a cis double bond between carbons 9 and 10 of the acyl chain. This is Stearoyl-[acyl-carrier-protein] 9-desaturase 5, chloroplastic from Oryza sativa subsp. indica (Rice).